The sequence spans 363 residues: DNA polymerase IV (363 aa).

The UmuC domain occupies 14 to 197 (IIHIDMDAFF…LPVEKFHGVG (184 aa)). Mg(2+) is bound by residues Asp-18 and Asp-115. Glu-116 is an active-site residue.

It belongs to the DNA polymerase type-Y family. In terms of assembly, monomer. The cofactor is Mg(2+).

It localises to the cytoplasm. The catalysed reaction is DNA(n) + a 2'-deoxyribonucleoside 5'-triphosphate = DNA(n+1) + diphosphate. Functionally, poorly processive, error-prone DNA polymerase involved in untargeted mutagenesis. Copies undamaged DNA at stalled replication forks, which arise in vivo from mismatched or misaligned primer ends. These misaligned primers can be extended by PolIV. Exhibits no 3'-5' exonuclease (proofreading) activity. May be involved in translesional synthesis, in conjunction with the beta clamp from PolIII. The chain is DNA polymerase IV from Lactococcus lactis subsp. lactis (strain IL1403) (Streptococcus lactis).